The chain runs to 98 residues: NADH-ubiquinone oxidoreductase chain 4L (98 aa).

Transmembrane regions (helical) follow at residues 1-21, 29-49, and 61-81; these read MSLVHINILMAFIMSLTGLLM, ALLCLEGMMLSLFVLATLTIL, and IILLVFAACEAAIGLALLVMI.

The protein belongs to the complex I subunit 4L family. In terms of assembly, core subunit of respiratory chain NADH dehydrogenase (Complex I) which is composed of 45 different subunits.

The protein resides in the mitochondrion inner membrane. It carries out the reaction a ubiquinone + NADH + 5 H(+)(in) = a ubiquinol + NAD(+) + 4 H(+)(out). In terms of biological role, core subunit of the mitochondrial membrane respiratory chain NADH dehydrogenase (Complex I) which catalyzes electron transfer from NADH through the respiratory chain, using ubiquinone as an electron acceptor. Part of the enzyme membrane arm which is embedded in the lipid bilayer and involved in proton translocation. The chain is NADH-ubiquinone oxidoreductase chain 4L (MT-ND4L) from Delphinapterus leucas (Beluga whale).